The chain runs to 82 residues: Small ribosomal subunit protein uS17 (82 aa).

The protein belongs to the universal ribosomal protein uS17 family. In terms of assembly, part of the 30S ribosomal subunit.

In terms of biological role, one of the primary rRNA binding proteins, it binds specifically to the 5'-end of 16S ribosomal RNA. In Rickettsia typhi (strain ATCC VR-144 / Wilmington), this protein is Small ribosomal subunit protein uS17.